We begin with the raw amino-acid sequence, 238 residues long: Ribonuclease PH (238 aa).

Residues R86 and 124–126 contribute to the phosphate site; that span reads GTR.

The protein belongs to the RNase PH family. As to quaternary structure, homohexameric ring arranged as a trimer of dimers.

The enzyme catalyses tRNA(n+1) + phosphate = tRNA(n) + a ribonucleoside 5'-diphosphate. Functionally, phosphorolytic 3'-5' exoribonuclease that plays an important role in tRNA 3'-end maturation. Removes nucleotide residues following the 3'-CCA terminus of tRNAs; can also add nucleotides to the ends of RNA molecules by using nucleoside diphosphates as substrates, but this may not be physiologically important. Probably plays a role in initiation of 16S rRNA degradation (leading to ribosome degradation) during starvation. The chain is Ribonuclease PH from Shigella dysenteriae serotype 1 (strain Sd197).